An 83-amino-acid chain; its full sequence is NAD(P)H-quinone oxidoreductase subunit L (83 aa).

The next 2 helical transmembrane spans lie at 17–37 (VLLA…LALL) and 53–73 (TAIY…APFI).

Belongs to the complex I NdhL subunit family. As to quaternary structure, NDH-1 can be composed of about 15 different subunits; different subcomplexes with different compositions have been identified which probably have different functions.

It localises to the cellular thylakoid membrane. It catalyses the reaction a plastoquinone + NADH + (n+1) H(+)(in) = a plastoquinol + NAD(+) + n H(+)(out). The enzyme catalyses a plastoquinone + NADPH + (n+1) H(+)(in) = a plastoquinol + NADP(+) + n H(+)(out). In terms of biological role, NDH-1 shuttles electrons from an unknown electron donor, via FMN and iron-sulfur (Fe-S) centers, to quinones in the respiratory and/or the photosynthetic chain. The immediate electron acceptor for the enzyme in this species is believed to be plastoquinone. Couples the redox reaction to proton translocation, and thus conserves the redox energy in a proton gradient. Cyanobacterial NDH-1 also plays a role in inorganic carbon-concentration. The protein is NAD(P)H-quinone oxidoreductase subunit L of Synechococcus sp. (strain RCC307).